We begin with the raw amino-acid sequence, 405 residues long: Acetate kinase (405 aa).

N7 serves as a coordination point for Mg(2+). K14 contributes to the ATP binding site. Substrate is bound at residue R90. D147 functions as the Proton donor/acceptor in the catalytic mechanism. ATP is bound by residues 207–211, 282–284, and 330–334; these read HLGNG, DMR, and GVGEN. Residue E383 coordinates Mg(2+).

The protein belongs to the acetokinase family. Homodimer. Mg(2+) is required as a cofactor. It depends on Mn(2+) as a cofactor.

It is found in the cytoplasm. It carries out the reaction acetate + ATP = acetyl phosphate + ADP. Its pathway is metabolic intermediate biosynthesis; acetyl-CoA biosynthesis; acetyl-CoA from acetate: step 1/2. Catalyzes the formation of acetyl phosphate from acetate and ATP. Can also catalyze the reverse reaction. In Pseudothermotoga lettingae (strain ATCC BAA-301 / DSM 14385 / NBRC 107922 / TMO) (Thermotoga lettingae), this protein is Acetate kinase.